A 191-amino-acid chain; its full sequence is Protein YceI (191 aa).

A signal peptide spans 1–22; sequence MKKNLLGFTLASLLFTTGSAVA.

It belongs to the UPF0312 family. Type 1 subfamily.

It localises to the periplasm. This is Protein YceI from Salmonella newport (strain SL254).